The following is a 294-amino-acid chain: Secreted frizzled-related protein 2 (294 aa).

Positions 1–24 are cleaved as a signal peptide; that stretch reads MPRGPGSLLLLVLASHCCLGSARG. The 121-residue stretch at 34 to 154 folds into the FZ domain; that stretch reads YKRSNCKPIP…PQDNDLCIPL (121 aa). Cystine bridges form between C39/C102, C49/C95, C86/C124, C113/C151, C117/C141, C171/C244, C174/C246, and C189/C294. The NTR domain occupies 171 to 294; sequence CEACKNKNED…ISRSIRKLQC (124 aa).

Belongs to the secreted frizzled-related protein (sFRP) family.

The protein localises to the secreted. Soluble frizzled-related proteins (sFRPS) function as modulators of Wnt signaling through direct interaction with Wnts. They have a role in regulating cell growth and differentiation in specific cell types. SFRP2 may be important for eye retinal development and for myogenesis. The protein is Secreted frizzled-related protein 2 (SFRP2) of Canis lupus familiaris (Dog).